The primary structure comprises 802 residues: Copper-exporting P-type ATPase (802 aa).

2 consecutive HMA domains span residues 5–70 (KKTT…YGVA) and 72–138 (ETVE…YDAS). 4 residues coordinate Cu(+): Cys-16, Cys-19, Cys-83, and Cys-86. The next 6 helical transmembrane spans lie at 161 to 181 (LIIS…HLFN), 192 to 212 (WFQF…FYVG), 224 to 244 (MDVL…YEMV), 256 to 276 (LYFE…YLEA), 411 to 431 (YFVP…ITLV), and 438 to 458 (PALV…LGLA). Asp-495 functions as the 4-aspartylphosphate intermediate in the catalytic mechanism. Positions 690 and 694 each coordinate Mg(2+). A run of 2 helical transmembrane segments spans residues 748 to 767 (LFWA…LGLL) and 771 to 790 (VAGA…ALRL).

This sequence belongs to the cation transport ATPase (P-type) (TC 3.A.3) family. Type IB subfamily.

Its subcellular location is the cell membrane. The enzyme catalyses Cu(+)(in) + ATP + H2O = Cu(+)(out) + ADP + phosphate + H(+). Functionally, involved in copper export. This chain is Copper-exporting P-type ATPase (copA), found in Staphylococcus aureus (strain MW2).